The following is a 1097-amino-acid chain: uncharacterized protein (1097 aa).

The stretch at 31–1087 forms a coiled coil; that stretch reads LLNVARQEEE…TALNKLRTRH (1057 aa).

The protein belongs to the TRAFAC class myosin-kinesin ATPase superfamily. Myosin family. Specifically expressed in muscles of the head including temporalis and tensor veli palatini.

Functionally, has most probably lost the function in masticatory muscles contraction suspected for its homologs in dog (AC F1PT61) and apes. This is an uncharacterized protein from Homo sapiens (Human).